A 351-amino-acid chain; its full sequence is MADPIFFKPSRELTIGDVADFTGASLRDPKLAPRSVERLASLKDAGEGALVFVEGKKNVSSLVGLKAAGVLCTESLADSVPSGIAVLVSRHPHRDFSAVGRMLFPASVRPESWLGETGISPAAFIHPTAQIEDGATVEAGAVIGSGVTIGAGTLIAATAVIGQNCQIGRNSYIAPGVSVQCAFIGNNVSLHPGVRIGQDGFGYVPGAAGLDKVPQLGRVIIQDNVEIGANTTVDRGSLDDTVIGEGTKIDNLVQIAHNVRIGRFCLVAAHCGISGSCVIGDQTMLGGRVGLADHLIIGSRVQVAAASGVMNDIPDGERWGGIPARPIKQWFRDIANIRSIGQSRKDASSDE.

H257 functions as the Proton acceptor in the catalytic mechanism.

This sequence belongs to the transferase hexapeptide repeat family. LpxD subfamily. As to quaternary structure, homotrimer.

It catalyses the reaction a UDP-3-O-[(3R)-3-hydroxyacyl]-alpha-D-glucosamine + a (3R)-hydroxyacyl-[ACP] = a UDP-2-N,3-O-bis[(3R)-3-hydroxyacyl]-alpha-D-glucosamine + holo-[ACP] + H(+). It functions in the pathway bacterial outer membrane biogenesis; LPS lipid A biosynthesis. Functionally, catalyzes the N-acylation of UDP-3-O-acylglucosamine using 3-hydroxyacyl-ACP as the acyl donor. Is involved in the biosynthesis of lipid A, a phosphorylated glycolipid that anchors the lipopolysaccharide to the outer membrane of the cell. The sequence is that of UDP-3-O-acylglucosamine N-acyltransferase from Brucella abortus (strain S19).